Consider the following 206-residue polypeptide: Venom allergen 5 2 (206 aa).

4 disulfides stabilise this stretch: Cys4-Cys16, Cys8-Cys104, Cys28-Cys96, and Cys172-Cys189. One can recognise an SCP domain in the interval 48–191; that stretch reads DEHNRFRQKV…MKSHYLVCNY (144 aa).

It belongs to the CRISP family. Venom allergen 5-like subfamily. Expressed by the venom gland.

The protein localises to the secreted. The polypeptide is Venom allergen 5 2 (Polybia paulista (Neotropical social wasp)).